We begin with the raw amino-acid sequence, 1371 residues long: Serine protease pic autotransporter (1371 aa).

The signal sequence occupies residues 1 to 55 (MNKVYSLKYCPVTGGLIVVSELASRVIKKTCRRLTHILLAGIPAVYLYYPQISQA). A Peptidase S6 domain is found at 56–301 (GIVRSDIAYQ…NVIPTDYLNQ (246 aa)). Active-site charge relay system residues include H127, D155, and S258. The Autotransporter domain occupies 1105-1371 (DTNGDAGAWA…AVNANFRYMF (267 aa)).

Cleaved to release the mature protein from the outer membrane.

It localises to the periplasm. The protein localises to the secreted. Its subcellular location is the cell surface. It is found in the cell outer membrane. Involved in virulence of uropathogenic E.coli although it is not known how it contributes to it. Has no mucinase activity. This is Serine protease pic autotransporter (pic) from Escherichia coli O6:H1 (strain CFT073 / ATCC 700928 / UPEC).